The chain runs to 368 residues: Flagellar P-ring protein (368 aa).

The first 24 residues, 1–24 (MNSIFRKIVFAAFLLLALPQFALA), serve as a signal peptide directing secretion.

It belongs to the FlgI family. In terms of assembly, the basal body constitutes a major portion of the flagellar organelle and consists of four rings (L,P,S, and M) mounted on a central rod.

The protein localises to the periplasm. The protein resides in the bacterial flagellum basal body. Its function is as follows. Assembles around the rod to form the L-ring and probably protects the motor/basal body from shearing forces during rotation. This Geotalea uraniireducens (strain Rf4) (Geobacter uraniireducens) protein is Flagellar P-ring protein.